A 733-amino-acid polypeptide reads, in one-letter code: Forkhead box protein K1 (733 aa).

The residue at position 2 (Ala2) is an N-acetylalanine. The interaction with SIN3A and SIN3B stretch occupies residues 2 to 40; that stretch reads AEVGEDSGARALLALRSAPCSPVLCAAAAAAAFPAAAPP. The tract at residues 36–79 is disordered; sequence AAAPPPAPAQPQPPPGPPPPPPPPLPPGAIAGAGSSGGSSGVSG. Over residues 37-62 the composition is skewed to pro residues; it reads AAPPPAPAQPQPPPGPPPPPPPPLPP. The interval 95–420 is required for interaction with FOXO4 and MEF2C; the sequence is AASVRQSPGP…PLSSRSAPAS (326 aa). Position 101 is a phosphoserine (Ser101). Residues 123-175 enclose the FHA domain; it reads VTIGRNSSQGSVDLSMGLSSFISRRHLQLSFQEPHFYLRCLGKNGVFVDGAFQ. 2 positions are modified to omega-N-methylarginine: Arg161 and Arg191. Phosphoserine is present on residues Ser213, Ser223, Ser239, and Ser243. A phosphothreonine mark is found at Thr245 and Thr247. 4 positions are modified to phosphoserine: Ser253, Ser257, Ser295, and Ser299. Disordered stretches follow at residues 287-306 and 413-436; these read ASEQ…ESKP and SSRS…GLQT. The segment at residues 305–400 is a DNA-binding region (fork-head); that stretch reads KPPFSYAQLI…EQAFRKRRQR (96 aa). Ser416 and Ser420 each carry phosphoserine. A Phosphothreonine modification is found at Thr422. A Phosphoserine modification is found at Ser428. The residue at position 436 (Thr436) is a Phosphothreonine. Phosphoserine is present on residues Ser441, Ser445, and Ser459. Over residues 676 to 697 the composition is skewed to low complexity; the sequence is VAATATTTPATATTASASASST. A disordered region spans residues 676 to 733; that stretch reads VAATATTTPATATTASASASSTGEPEVKRSRVEEPSGAVTTPAGVIAAAGPQGPGTGE. Over residues 700 to 709 the composition is skewed to basic and acidic residues; it reads PEVKRSRVEE.

Interacts with SIN3A and SIN3B (via PAH2) to form a complex which represses transcription. Component of SIN3A-, but not SIN3B-, containing multiprotein complexes. Interacts with FOXO4 and MEF2C; both interactions inhibit FOXO4 and MEF2C transactivation activity. Interacts (when phosphorylated) with YWHAE/14-3-3-epsilon; promotes sequestration in the cytoplasm and leads to impaired ability to bind DNA. Interacts with FHL2. Interacts with SRF. Interacts with DVL2 and DVL3; the interaction induces DVL2 nuclear translocation. Interacts with BAP1 (when phosphorylated). Accessory component of the polycomb repressive deubiquitinase (PR-DUB) complex, at least composed of BAP1, one of ASXL1, ASXL2 or (probably) ASXL3 and one of MBD5 or MBD6. The PR-DUB core associates with a number of accessory proteins, including FOXK1, FOXK2, KDM1B, HCFC1 and OGT. Post-translationally, phosphorylation by GSK3 (GSK3A or GSK3B) promotes interaction with YWHAE/14-3-3-epsilon and retention in the cytoplasm. In response to mTORC1 signaling, phosphorylation by GSK3 is prevented, leading to translocation to the nucleus. In terms of tissue distribution, expressed both developing and adult tissues. In adults, significant expression is seen in tumors of the brain, colon and lymph node.

It localises to the nucleus. The protein localises to the cytoplasm. In terms of biological role, transcriptional regulator involved in different processes such as glucose metabolism, aerobic glycolysis, muscle cell differentiation and autophagy. Recognizes and binds the forkhead DNA sequence motif (5'-GTAAACA-3') and can both act as a transcription activator or repressor, depending on the context. Together with FOXK2, acts as a key regulator of metabolic reprogramming towards aerobic glycolysis, a process in which glucose is converted to lactate in the presence of oxygen. Acts by promoting expression of enzymes for glycolysis (such as hexokinase-2 (HK2), phosphofructokinase, pyruvate kinase (PKLR) and lactate dehydrogenase), while suppressing further oxidation of pyruvate in the mitochondria by up-regulating pyruvate dehydrogenase kinases PDK1 and PDK4. Probably plays a role in gluconeogenesis during overnight fasting, when lactate from white adipose tissue and muscle is the main substrate. Involved in mTORC1-mediated metabolic reprogramming: in response to mTORC1 signaling, translocates into the nucleus and regulates the expression of genes associated with glycolysis and downstream anabolic pathways, such as HIF1A, thereby regulating glucose metabolism. Together with FOXK2, acts as a negative regulator of autophagy in skeletal muscle: in response to starvation, enters the nucleus, binds the promoters of autophagy genes and represses their expression, preventing proteolysis of skeletal muscle proteins. Acts as a transcriptional regulator of the myogenic progenitor cell population in skeletal muscle. Binds to the upstream enhancer region (CCAC box) of myoglobin (MB) gene, regulating the myogenic progenitor cell population. Promotes muscle progenitor cell proliferation by repressing the transcriptional activity of FOXO4, thereby inhibiting myogenic differentiation. Involved in remodeling processes of adult muscles that occur in response to physiological stimuli. Required to correct temporal orchestration of molecular and cellular events necessary for muscle repair. Represses myogenic differentiation by inhibiting MEFC activity. Positively regulates Wnt/beta-catenin signaling by translocating DVL into the nucleus. Reduces virus replication, probably by binding the interferon stimulated response element (ISRE) to promote antiviral gene expression. Accessory component of the polycomb repressive deubiquitinase (PR-DUB) complex; recruits the PR-DUB complex to specific FOXK1-bound genes. This is Forkhead box protein K1 from Homo sapiens (Human).